The following is a 384-amino-acid chain: Guanine nucleotide-binding protein alpha-1 subunit (384 aa).

Gly2 is lipidated: N-myristoyl glycine. The S-palmitoyl cysteine moiety is linked to residue Cys5. A G-alpha domain is found at 38-384 (HIRKLLLLGA…RRNLFEAGLL (347 aa)). The interval 41–54 (KLLLLGAGESGKST) is G1 motif. GTP is bound by residues Glu49, Ser50, Gly51, Lys52, Ser53, Thr54, Asp163, Leu188, Thr194, Gly222, Asn288, Lys289, Asp291, and Ala356. Position 53 (Ser53) interacts with Mg(2+). The interval 186-194 (DVLLARVRT) is G2 motif. Residue Thr194 participates in Mg(2+) binding. The interval 215-224 (YRLFDVGGQR) is G3 motif. The G4 motif stretch occupies residues 284-291 (MLFLNKFD). Positions 354 to 359 (TTALDQ) are G5 motif.

This sequence belongs to the G-alpha family. G proteins are composed of 3 units; alpha, beta and gamma. The alpha chain contains the guanine nucleotide binding site. It depends on Mg(2+) as a cofactor.

Guanine nucleotide-binding proteins (G proteins) are involved as modulators or transducers in various transmembrane signaling systems. This Pisum sativum (Garden pea) protein is Guanine nucleotide-binding protein alpha-1 subunit (GPA1).